Here is a 185-residue protein sequence, read N- to C-terminus: Elongation factor P (185 aa).

The protein belongs to the elongation factor P family.

The protein resides in the cytoplasm. Its pathway is protein biosynthesis; polypeptide chain elongation. Functionally, involved in peptide bond synthesis. Stimulates efficient translation and peptide-bond synthesis on native or reconstituted 70S ribosomes in vitro. Probably functions indirectly by altering the affinity of the ribosome for aminoacyl-tRNA, thus increasing their reactivity as acceptors for peptidyl transferase. The chain is Elongation factor P from Bacillus pumilus (strain SAFR-032).